We begin with the raw amino-acid sequence, 177 residues long: Peptidyl-prolyl cis-trans isomerase H (177 aa).

At Ala2 the chain carries N-acetylalanine. One can recognise a PPIase cyclophilin-type domain in the interval Phe14–Glu176.

The protein belongs to the cyclophilin-type PPIase family. PPIase H subfamily. Interacts directly with PRPF4. Part of a heteromeric complex containing PPIH, PRPF3 and PRPF4 that is stable in the absence of RNA. Component of the U4/U6-U5 tri-snRNP complex composed of the U4, U6 and U5 snRNAs and at least PRPF3, PRPF4, PRPF6, PRPF8, PRPF31, SNRNP200, TXNL4A, SNRNP40, DDX23, CD2BP2, PPIH, SNU13, EFTUD2, SART1 and USP39. Heterodimer with PRPF18.

It is found in the nucleus speckle. It localises to the cytoplasm. It catalyses the reaction [protein]-peptidylproline (omega=180) = [protein]-peptidylproline (omega=0). Its activity is regulated as follows. Inhibited by cyclosporin A. In terms of biological role, PPIase that catalyzes the cis-trans isomerization of proline imidic peptide bonds in oligopeptides and may therefore assist protein folding. Participates in pre-mRNA splicing. May play a role in the assembly of the U4/U5/U6 tri-snRNP complex, one of the building blocks of the spliceosome. May act as a chaperone. The chain is Peptidyl-prolyl cis-trans isomerase H (PPIH) from Homo sapiens (Human).